Consider the following 254-residue polypeptide: Phosphoribosylaminoimidazole-succinocarboxamide synthase (254 aa).

Belongs to the SAICAR synthetase family.

The catalysed reaction is 5-amino-1-(5-phospho-D-ribosyl)imidazole-4-carboxylate + L-aspartate + ATP = (2S)-2-[5-amino-1-(5-phospho-beta-D-ribosyl)imidazole-4-carboxamido]succinate + ADP + phosphate + 2 H(+). It participates in purine metabolism; IMP biosynthesis via de novo pathway; 5-amino-1-(5-phospho-D-ribosyl)imidazole-4-carboxamide from 5-amino-1-(5-phospho-D-ribosyl)imidazole-4-carboxylate: step 1/2. This is Phosphoribosylaminoimidazole-succinocarboxamide synthase from Brucella canis (strain ATCC 23365 / NCTC 10854 / RM-666).